A 453-amino-acid chain; its full sequence is Kynureninase (453 aa).

Residues leucine 111, threonine 112, phenylalanine 139 to aspartate 142, serine 196, aspartate 226, histidine 229, and tyrosine 251 each bind pyridoxal 5'-phosphate. Lysine 252 carries the post-translational modification N6-(pyridoxal phosphate)lysine. Residues tryptophan 286 and asparagine 314 each coordinate pyridoxal 5'-phosphate.

The protein belongs to the kynureninase family. In terms of assembly, homodimer. Pyridoxal 5'-phosphate serves as cofactor.

It is found in the cytoplasm. Its subcellular location is the nucleus. The catalysed reaction is L-kynurenine + H2O = anthranilate + L-alanine + H(+). It catalyses the reaction 3-hydroxy-L-kynurenine + H2O = 3-hydroxyanthranilate + L-alanine + H(+). It functions in the pathway amino-acid degradation; L-kynurenine degradation; L-alanine and anthranilate from L-kynurenine: step 1/1. Its pathway is cofactor biosynthesis; NAD(+) biosynthesis; quinolinate from L-kynurenine: step 2/3. Catalyzes the cleavage of L-kynurenine (L-Kyn) and L-3-hydroxykynurenine (L-3OHKyn) into anthranilic acid (AA) and 3-hydroxyanthranilic acid (3-OHAA), respectively. This chain is Kynureninase, found in Saccharomyces cerevisiae (strain ATCC 204508 / S288c) (Baker's yeast).